A 1388-amino-acid chain; its full sequence is Kinesin-like protein KIF15-A (1388 aa).

The Kinesin motor domain maps to 26-364; sequence AIKVFVRIRP…LQFAQRAKLI (339 aa). An ATP-binding site is contributed by 110–117; sequence GQTGSGKT. Residues 369-1383 are a coiled coil; it reads VVNEDTQGNV…ENLFLKESKK (1015 aa). The segment at 1127–1156 is disordered; sequence EQEKIRPASSNSSSPVVLPETPRTPEGNPY. The tract at residues 1139 to 1388 is necessary for its targeting to microtubule minus ends; sequence SSPVVLPETP…KESKKCEHCN (250 aa).

Belongs to the TRAFAC class myosin-kinesin ATPase superfamily. Kinesin family. KLP2 subfamily. In terms of assembly, homodimer. Dimerization is required for targeting to microtubule minus ends. Found in a complex with tpx2 and microtubules. Its association with microtubules and targeting to microtubule minus ends requires tpx2. In terms of tissue distribution, strongly expressed in testis and weakly in lung (at protein level).

Its subcellular location is the cytoplasm. The protein localises to the cytoskeleton. It is found in the microtubule organizing center. It localises to the centrosome. The protein resides in the spindle. Its subcellular location is the spindle pole. In terms of biological role, plus-end directed kinesin-like motor enzyme involved in mitotic spindle assembly. Required for centrosome separation and maintenance of spindle bipolarity during mitosis. The polypeptide is Kinesin-like protein KIF15-A (kif15-a) (Xenopus laevis (African clawed frog)).